Reading from the N-terminus, the 216-residue chain is MKLTWIKCMRKTEKMNDIDEPRLFEETGIEAFVAALVIPLLKPLDFRLVRVKLLGQNGLTLQIMVERADGSMTIEDCETVSRTVSHLLDVQNVIERKYHLEISSPGIDRPLVRKSDFFHWQGHIAKIETKITIDGRKKFRGILANITQEGLTLNTDKAAYGEAMYIAIPFDNIIDAHLVLTDELIRNALKKNKDLSQQFISEDNPNVSKQLSNYKN.

It belongs to the RimP family.

It localises to the cytoplasm. Functionally, required for maturation of 30S ribosomal subunits. The chain is Ribosome maturation factor RimP from Bartonella quintana (strain Toulouse) (Rochalimaea quintana).